The primary structure comprises 307 residues: Leucine-rich repeat-containing protein 59 (307 aa).

Methionine 1 carries the N-acetylmethionine modification. An N-acetylthreonine; in Leucine-rich repeat-containing protein 59, N-terminally processed modification is found at threonine 2. The Cytoplasmic segment spans residues 2 to 244 (TKAGSKGGNL…KPPPRKHTRS (243 aa)). LRR repeat units follow at residues 10–31 (NLRDKLDGNELDLSLSDLNEVP), 40–62 (KATVLDLSCNKLSTLPSDFCGLT), 63–84 (HLVKLDLSKNKLQQLPADFGRL), 86–107 (NLQHLDLLNNRLVTLPVSFAQL), and 109–128 (NLKWLDLKDNPLDPVLAKVA). A phosphoserine mark is found at serine 23 and serine 25. Lysine 73 carries the post-translational modification N6-succinyllysine. Lysine 135 bears the N6-acetyllysine mark. Positions 148-216 (MKAVQADQER…KASKREQEKK (69 aa)) form a coiled coil. The disordered stretch occupies residues 150–241 (AVQADQERER…RPRKPPPRKH (92 aa)). A compositionally biased stretch (basic and acidic residues) spans 154-221 (DQERERQRRL…EQEKKPKKEA (68 aa)). The segment covering 229 to 241 (SGSRPRKPPPRKH) has biased composition (basic residues). A helical membrane pass occupies residues 245–265 (WAVLKVLLLLLLLCVAGGLVV). Over 266–307 (CRVTGLHQQPLCTSVNTIYDNAVQGLRHHEILQWVLQTDSQQ) the chain is Lumenal.

As to quaternary structure, can form homodimers. Interacts with SGO1. Interacts with FGF1.

It localises to the microsome membrane. The protein localises to the endoplasmic reticulum membrane. It is found in the nucleus envelope. Its function is as follows. Required for nuclear import of FGF1, but not that of FGF2. Might regulate nuclear import of exogenous FGF1 by facilitating interaction with the nuclear import machinery and by transporting cytosolic FGF1 to, and possibly through, the nuclear pores. In Mus musculus (Mouse), this protein is Leucine-rich repeat-containing protein 59 (Lrrc59).